Here is a 76-residue protein sequence, read N- to C-terminus: Putative defensin-like protein 121 (76 aa).

An N-terminal signal peptide occupies residues 1-26 (MTYKATILAIFMIILVLGIGTKETRG). 4 disulfide bridges follow: Cys30–Cys74, Cys39–Cys59, Cys44–Cys68, and Cys48–Cys70.

The protein belongs to the DEFL family.

Its subcellular location is the secreted. In Arabidopsis thaliana (Mouse-ear cress), this protein is Putative defensin-like protein 121 (LCR55).